A 165-amino-acid chain; its full sequence is GTP-dependent dephospho-CoA kinase (165 aa).

GTP contacts are provided by Asp44, Val45, Asp63, Lys65, Glu115, and Asp138.

Belongs to the GTP-dependent DPCK family.

The enzyme catalyses 3'-dephospho-CoA + GTP = GDP + CoA + H(+). Its pathway is cofactor biosynthesis; coenzyme A biosynthesis. In terms of biological role, catalyzes the GTP-dependent phosphorylation of the 3'-hydroxyl group of dephosphocoenzyme A to form coenzyme A (CoA). In Picrophilus torridus (strain ATCC 700027 / DSM 9790 / JCM 10055 / NBRC 100828 / KAW 2/3), this protein is GTP-dependent dephospho-CoA kinase.